The chain runs to 79 residues: Acyl carrier protein (79 aa).

Positions 2–77 constitute a Carrier domain; the sequence is SEIGERVKKI…DATKFLEKNA (76 aa). Ser37 bears the O-(pantetheine 4'-phosphoryl)serine mark.

This sequence belongs to the acyl carrier protein (ACP) family. Post-translationally, 4'-phosphopantetheine is transferred from CoA to a specific serine of apo-ACP by AcpS. This modification is essential for activity because fatty acids are bound in thioester linkage to the sulfhydryl of the prosthetic group.

Its subcellular location is the cytoplasm. It functions in the pathway lipid metabolism; fatty acid biosynthesis. In terms of biological role, carrier of the growing fatty acid chain in fatty acid biosynthesis. The sequence is that of Acyl carrier protein from Rhodopseudomonas palustris (strain HaA2).